Here is a 1265-residue protein sequence, read N- to C-terminus: DNA-directed RNA polymerase subunit beta'' (1265 aa).

Cys223, Cys297, Cys304, and Cys307 together coordinate Zn(2+).

It belongs to the RNA polymerase beta' chain family. RpoC2 subfamily. In terms of assembly, in plastids the minimal PEP RNA polymerase catalytic core is composed of four subunits: alpha, beta, beta', and beta''. When a (nuclear-encoded) sigma factor is associated with the core the holoenzyme is formed, which can initiate transcription. The cofactor is Zn(2+).

It localises to the plastid. It is found in the cyanelle. It carries out the reaction RNA(n) + a ribonucleoside 5'-triphosphate = RNA(n+1) + diphosphate. DNA-dependent RNA polymerase catalyzes the transcription of DNA into RNA using the four ribonucleoside triphosphates as substrates. This Cyanophora paradoxa protein is DNA-directed RNA polymerase subunit beta''.